The chain runs to 537 residues: Glucans biosynthesis protein D 2 (537 aa).

The segment at residues 1–28 (MVTRRHLLASASLSATLAALGITPEALA) is a signal peptide (tat-type signal).

It belongs to the OpgD/OpgG family. Post-translationally, predicted to be exported by the Tat system. The position of the signal peptide cleavage has not been experimentally proven.

The protein resides in the periplasm. It participates in glycan metabolism; osmoregulated periplasmic glucan (OPG) biosynthesis. In terms of biological role, probably involved in the control of the structural glucose backbone of osmoregulated periplasmic glucans (OPGs). This chain is Glucans biosynthesis protein D 2 (opgD2), found in Ralstonia nicotianae (strain ATCC BAA-1114 / GMI1000) (Ralstonia solanacearum).